Consider the following 501-residue polypeptide: MRQSREELIKRGVLKEIFDKDGELSIPNEEGALENGQPLGSGQVLSSSQVSLPALAELESGSAPGEPCSYEVLPTTEITDGTVSEESPTSNESGVLLSQDPTAKPVLLLPPKKSAAFPGDHEDTPVKQLSLLKQPPALPPKPIARIASHLTDPGAPVKLPCMPVKLSPPLPPKKVMICMPLGGPDLSSLSSYSTQKSSQQPLTQHHHTVLPSQLAAHQHQLQYGSHSQHLPSGSSTLPIHPSGCRMIEELNKTLAMTMQRLESSGLHTGDNVTKTGPGGLPDMRQVPTVVIECDDNKENVPHEADYEDSSCLYPRQEEEEEEDEDEDNSLFTSSLAMKVCRKDSLAIKLSNRPSKRELEEKNILPMQTDEERLELRQQIGTKLTRRLSQRPTAEELEQRNILKPRNEQEEQEEKREIKRRLTRKLSQRPTVEELRERKILIRFSDYVEVADAQDYDRRADKPWTRLTAADKAAIRKELNEFKSSEMEVHELSRHLTRFHRP.

One copy of the RPEL 1 repeat lies at Met-1–Phe-18. Disordered stretches follow at residues Asp-21 to Ser-46 and Asp-295 to Ser-329. Over residues Gly-36–Ser-46 the composition is skewed to low complexity. Positions Asp-295–Ala-304 are enriched in basic and acidic residues. The span at Glu-317–Asn-328 shows a compositional bias: acidic residues. 3 RPEL repeats span residues Asp-343 to Thr-368, Thr-381 to Asn-406, and Arg-419 to Ser-444. The disordered stretch occupies residues Lys-382–Arg-415. The span at Thr-392 to Arg-415 shows a compositional bias: basic and acidic residues.

Belongs to the phosphatase and actin regulator family. Interacts (via RPEL repeats) with ACTA1. Expressed in the gizzard, and in neurons from central and peripheral nervous systems.

The protein localises to the cytoplasm. Its subcellular location is the synapse. It localises to the nucleus. Its function is as follows. Binds actin monomers (G actin) and plays a role in the reorganization of the actin cytoskeleton and in formation of actin stress fibers. This is Phosphatase and actin regulator 1 (PHACTR1) from Gallus gallus (Chicken).